The primary structure comprises 354 residues: DNA integrity scanning protein DisA (354 aa).

One can recognise a DAC domain in the interval 6-144; that stretch reads GMKIKDTLKI…GDIKYVLRDS (139 aa). ATP contacts are provided by residues Gly-73, Leu-91, and 104–108; that span reads TRHRT.

Belongs to the DisA family. As to quaternary structure, homooctamer. Requires Mg(2+) as cofactor.

It catalyses the reaction 2 ATP = 3',3'-c-di-AMP + 2 diphosphate. Participates in a DNA-damage check-point that is active prior to asymmetric division when DNA is damaged. DisA forms globular foci that rapidly scan along the chromosomes during sporulation, searching for lesions. When a lesion is present, DisA pauses at the lesion site. This triggers a cellular response that culminates in a temporary block in sporulation initiation. In terms of biological role, also has diadenylate cyclase activity, catalyzing the condensation of 2 ATP molecules into cyclic di-AMP (c-di-AMP). c-di-AMP acts as a signaling molecule that couples DNA integrity with progression of sporulation. The rise in c-di-AMP level generated by DisA while scanning the chromosome, operates as a positive signal that advances sporulation; upon encountering a lesion, the DisA focus arrests at the damaged site and halts c-di-AMP synthesis. The chain is DNA integrity scanning protein DisA from Clostridium botulinum (strain Alaska E43 / Type E3).